Here is a 62-residue protein sequence, read N- to C-terminus: Zinc metalloproteinase-disintegrin-like BaG (62 aa).

Positions 24–54 (KTDLLNRSHDNAQLSPINLVVAVIMAHEMGH) constitute a Peptidase M12B domain. Asn29 carries N-linked (GlcNAc...) asparagine glycosylation. His50 is a Zn(2+) binding site. Glu51 is a catalytic residue. His54 is a Zn(2+) binding site.

Belongs to the venom metalloproteinase (M12B) family. P-III subfamily. P-IIIc sub-subfamily. Dimer. Requires Zn(2+) as cofactor. The N-terminus is blocked. As to expression, expressed by the venom gland.

The protein resides in the secreted. Its activity is regulated as follows. Inhibited by EDTA, and 1,10-phenanthroline. Its function is as follows. Snake venom Zinc metalloproteinase that inhibits ADP-induced platelet aggregation and inhibits the alpha-5/beta-1 (ITGA5/ITGB1) integrin, a fibronectin receptor. Has caseinolytic activity. Induces the detachment of cells that are bound to fibronectin. The polypeptide is Zinc metalloproteinase-disintegrin-like BaG (Bothrops alternatus (Urutu)).